We begin with the raw amino-acid sequence, 352 residues long: MASTICFILWVVFVTDTVWTRSVRQVYEASDPEDWTMHDFDCPRECFCPPSFPTALYCENRGLKEIPAIPSRIWYLYLENNLIETIPEKPFENATQLRWINLNKNKITNYGIEKGALSQLKKLLFLFLEDNELEEVPSPLPRSLEQLQLARNKVSRIPQGTFSNLENLTLLDLQHNKLLDNAFQRDTFKGLKNLMQLNMAKNALRNMPPRLPANTMQVFLDNNSIEGIPENYFNVIPKVAFLRLNHNKLSDAGLPSSGFNVSSILDLQLSHNQLTKVPKISAHLQHLHLDHNKIRNVNVSVICPSTPTTLPVEDSFSYGPHLRYLRLDGNEIKPPIPMDLMTCFRLLQAVII.

The signal sequence occupies residues 1–20 (MASTICFILWVVFVTDTVWT). Residues 33–71 (EDWTMHDFDCPRECFCPPSFPTALYCENRGLKEIPAIPS) form the LRRNT domain. 2 cysteine pairs are disulfide-bonded: Cys-42-Cys-48 and Cys-46-Cys-58. LRR repeat units lie at residues 72–93 (RIWY…PFEN), 96–117 (QLRW…KGAL), 122–142 (KLLF…PLPR), 143–164 (SLEQ…TFSN), 167–180 (NLTL…KLLD), 193–214 (NLMQ…LPAN), 215–235 (TMQV…YFNV), and 238–258 (KVAF…PSSG). An N-linked (GlcNAc...) (keratan sulfate) asparagine glycan is attached at Asn-93. A glycan (N-linked (GlcNAc...) (keratan sulfate) asparagine) is linked at Asn-167. Asn-222 is a glycosylation site (N-linked (GlcNAc...) asparagine). Asn-260 is a glycosylation site (N-linked (GlcNAc...) (keratan sulfate) asparagine). 2 LRR repeats span residues 263-282 (SILD…KISA) and 283-304 (HLQH…VICP). Asn-298 is a glycosylation site (N-linked (GlcNAc...) asparagine). The cysteines at positions 303 and 343 are disulfide-linked.

It belongs to the small leucine-rich proteoglycan (SLRP) family. SLRP class II subfamily. Post-translationally, binds three long, highly sulfated keratan sulfate chains in the cornea but short, non-sulfated poly(N-acetyllactosamine) chains in other tissues. In terms of processing, the N-terminus is blocked. Abundant in cornea and sclera but also found in other tissues.

Its subcellular location is the secreted. It is found in the extracellular space. It localises to the extracellular matrix. Functionally, may be important in developing and maintaining corneal transparency and for the structure of the stromal matrix. This chain is Keratocan (KERA), found in Bos taurus (Bovine).